A 383-amino-acid polypeptide reads, in one-letter code: Succinate--CoA ligase [ADP-forming] subunit beta (383 aa).

In terms of domain architecture, ATP-grasp spans 9–241 (KEVLHKFNVS…YDEEVKEEIE (233 aa)). Residues K46, 53 to 55 (GRG), E99, S102, and E107 contribute to the ATP site. Mg(2+)-binding residues include N196 and D210. Residues N261 and 318-320 (GIM) contribute to the substrate site.

Belongs to the succinate/malate CoA ligase beta subunit family. In terms of assembly, heterotetramer of two alpha and two beta subunits. Mg(2+) serves as cofactor.

The enzyme catalyses succinate + ATP + CoA = succinyl-CoA + ADP + phosphate. It carries out the reaction GTP + succinate + CoA = succinyl-CoA + GDP + phosphate. It functions in the pathway carbohydrate metabolism; tricarboxylic acid cycle; succinate from succinyl-CoA (ligase route): step 1/1. Succinyl-CoA synthetase functions in the citric acid cycle (TCA), coupling the hydrolysis of succinyl-CoA to the synthesis of either ATP or GTP and thus represents the only step of substrate-level phosphorylation in the TCA. The beta subunit provides nucleotide specificity of the enzyme and binds the substrate succinate, while the binding sites for coenzyme A and phosphate are found in the alpha subunit. The sequence is that of Succinate--CoA ligase [ADP-forming] subunit beta from Wolbachia sp. subsp. Drosophila simulans (strain wRi).